The following is a 107-amino-acid chain: ATP-dependent Clp protease adapter protein ClpS (107 aa).

Residues 1 to 20 (MAQKHEHDTSVITESAPKQK) are disordered.

Belongs to the ClpS family. In terms of assembly, binds to the N-terminal domain of the chaperone ClpA.

In terms of biological role, involved in the modulation of the specificity of the ClpAP-mediated ATP-dependent protein degradation. In Myxococcus xanthus (strain DK1622), this protein is ATP-dependent Clp protease adapter protein ClpS.